The following is an 805-amino-acid chain: Hypoxia-inducible factor 1-alpha (805 aa).

The segment at methionine 1–alanine 26 is disordered. The span at serine 8 to alanine 26 shows a compositional bias: basic and acidic residues. A bHLH domain is found at arginine 17–glutamate 70. 2 consecutive PAS domains span residues aspartate 85–lysine 157 and proline 229–glutamine 300. One can recognise a PAC domain in the interval threonine 303 to valine 346. 4-hydroxyproline occurs at positions 404 and 560. The disordered stretch occupies residues lysine 628–leucine 669. The span at glutamate 629–proline 648 shows a compositional bias: polar residues. The residue at position 782 (asparagine 782) is a (3S)-3-hydroxyasparagine.

In terms of assembly, efficient DNA binding requires heterodimerization of an alpha and a beta/ARNT subunit. Post-translationally, in normoxia, is hydroxylated on Pro-404 and Pro-560. The hydroxylated prolines promote interaction with VHL, initiating rapid ubiquitination and subsequent proteasomal degradation. Under hypoxia, proline hydroxylation is impaired and ubiquitination is attenuated, resulting in stabilization. In normoxia, is hydroxylated on Asn-782, thus abrogating interaction with CREBBP and EP300 and preventing transcriptional activation. In terms of processing, the iron and 2-oxoglutarate dependent 3-hydroxylation of asparagine is (S) stereospecific within HIF CTAD domains.

It is found in the cytoplasm. The protein resides in the nucleus. It localises to the nucleus speckle. With respect to regulation, induced by reactive oxygen species (ROS). Functions as a master transcriptional regulator of the adaptive response to hypoxia. Under hypoxic conditions, activates the transcription of over 40 genes, including erythropoietin, glucose transporters, glycolytic enzymes, vascular endothelial growth factor, HILPDA, and other genes whose protein products increase oxygen delivery or facilitate metabolic adaptation to hypoxia. Plays an essential role in embryonic vascularization, tumor angiogenesis and pathophysiology of ischemic disease. The sequence is that of Hypoxia-inducible factor 1-alpha (hif1a) from Xenopus laevis (African clawed frog).